The chain runs to 79 residues: Putative antitoxin VapB12 (79 aa).

This sequence belongs to the UPF0330 family.

In terms of biological role, possibly the antitoxin component of a type II toxin-antitoxin (TA) system. Its cognate toxin is VapC12 (Potential). The sequence is that of Putative antitoxin VapB12 (vapB12) from Sulfurisphaera tokodaii (strain DSM 16993 / JCM 10545 / NBRC 100140 / 7) (Sulfolobus tokodaii).